The following is a 367-amino-acid chain: Glutamate 5-kinase (367 aa).

K10 provides a ligand contact to ATP. Residues S50, D137, and N149 each coordinate substrate. ATP-binding positions include 169 to 170 (TD) and 211 to 217 (TGGMATK). Residues 275-353 (AGELVVDDGA…QQIGEILGYE (79 aa)) form the PUA domain.

Belongs to the glutamate 5-kinase family.

It localises to the cytoplasm. It catalyses the reaction L-glutamate + ATP = L-glutamyl 5-phosphate + ADP. The protein operates within amino-acid biosynthesis; L-proline biosynthesis; L-glutamate 5-semialdehyde from L-glutamate: step 1/2. Its function is as follows. Catalyzes the transfer of a phosphate group to glutamate to form L-glutamate 5-phosphate. This Erwinia tasmaniensis (strain DSM 17950 / CFBP 7177 / CIP 109463 / NCPPB 4357 / Et1/99) protein is Glutamate 5-kinase.